Consider the following 144-residue polypeptide: MLQPKKTKFRRQQKGRAKGNAQRGNQLAFGSFGIKALETKWITGRQIEAARIAVTRYMQRQGQIWIRIFPDKPITRKPADVRMGKGKGSPEGFVAPVTPGRIIIEAEGVSYEIAKEALRLAAQKLPITTKFVVRRDYDIQNQNA.

Basic residues predominate over residues M1 to A17. A disordered region spans residues M1–Q22.

This sequence belongs to the universal ribosomal protein uL16 family. Part of the 50S ribosomal subunit.

Functionally, binds 23S rRNA and is also seen to make contacts with the A and possibly P site tRNAs. The polypeptide is Large ribosomal subunit protein uL16 (Bacteroides fragilis (strain ATCC 25285 / DSM 2151 / CCUG 4856 / JCM 11019 / LMG 10263 / NCTC 9343 / Onslow / VPI 2553 / EN-2)).